Consider the following 220-residue polypeptide: Charged multivesicular body protein 2a (220 aa).

Position 1 is an N-acetylmethionine (M1). Coiled coils occupy residues 12–52 and 195–220; these read EELL…KMAK and RAAE…LRRD. The MIT-interacting motif signature appears at 208 to 218; the sequence is ADLEERLKNLR.

Belongs to the SNF7 family. As to quaternary structure, probable core component of the endosomal sorting required for transport complex III (ESCRT-III). ESCRT-III components are thought to multimerize to form a flat lattice on the perimeter membrane of the endosome.

The protein localises to the late endosome membrane. It localises to the cytoplasm. Probable core component of the endosomal sorting required for transport complex III (ESCRT-III) which is involved in multivesicular bodies (MVBs) formation and sorting of endosomal cargo proteins into MVBs. MVBs contain intraluminal vesicles (ILVs) that are generated by invagination and scission from the limiting membrane of the endosome and mostly are delivered to lysosomes enabling degradation of membrane proteins, such as stimulated growth factor receptors, lysosomal enzymes and lipids. The polypeptide is Charged multivesicular body protein 2a (CHMP2A) (Gallus gallus (Chicken)).